The following is a 545-amino-acid chain: Glucose-6-phosphate isomerase (545 aa).

Catalysis depends on glutamate 351, which acts as the Proton donor. Catalysis depends on residues histidine 382 and lysine 510.

It belongs to the GPI family.

The protein resides in the cytoplasm. The catalysed reaction is alpha-D-glucose 6-phosphate = beta-D-fructose 6-phosphate. The protein operates within carbohydrate biosynthesis; gluconeogenesis. Its pathway is carbohydrate degradation; glycolysis; D-glyceraldehyde 3-phosphate and glycerone phosphate from D-glucose: step 2/4. Functionally, catalyzes the reversible isomerization of glucose-6-phosphate to fructose-6-phosphate. This chain is Glucose-6-phosphate isomerase, found in Helicobacter pylori (strain G27).